A 981-amino-acid polypeptide reads, in one-letter code: Beta-glucuronidase (981 aa).

The active-site Nucleophile is the glutamate 500. Residues asparagine 561, tryptophan 562, isoleucine 563, serine 581, and glutamate 583 each contribute to the Mg(2+) site.

Belongs to the glycosyl hydrolase 2 family.

It localises to the periplasm. It catalyses the reaction a beta-D-glucuronoside + H2O = D-glucuronate + an alcohol. In terms of biological role, beta-glucuronidase involved in ulvan degradation. Ulvan is the main polysaccharide component of the Ulvales (green seaweed) cell wall. It is composed of disaccharide building blocks comprising 3-sulfated rhamnose (Rha3S) linked to D-glucuronic acid (GlcA), L-iduronic acid (IduA), or D-xylose (Xyl). Beta-glucuronidase removes GlcA side chains present on some O2 residues of Rha3S. Can remove the GlcA side chains from polymeric ulvan or from smaller oligomers. The protein is Beta-glucuronidase of Formosa agariphila (strain DSM 15362 / KCTC 12365 / LMG 23005 / KMM 3901 / M-2Alg 35-1).